We begin with the raw amino-acid sequence, 406 residues long: Probable tRNA pseudouridine synthase D (406 aa).

The Nucleophile role is filled by D77. The region spanning 150-371 (GFPNYFGIQR…PGGRRELLIK (222 aa)) is the TRUD domain.

This sequence belongs to the pseudouridine synthase TruD family.

The enzyme catalyses uridine(13) in tRNA = pseudouridine(13) in tRNA. Functionally, could be responsible for synthesis of pseudouridine from uracil-13 in transfer RNAs. The sequence is that of Probable tRNA pseudouridine synthase D from Pyrococcus abyssi (strain GE5 / Orsay).